The primary structure comprises 327 residues: Probable cell division protein WhiA (327 aa).

Positions 275 to 308 form a DNA-binding region, H-T-H motif; that stretch reads SLEELGRLADPPMTKDAVAGRIRRLLSMADRKAK. A disordered region spans residues 304–327; that stretch reads DRKAKQDGIPDTESAVTPDLLEDA.

Belongs to the WhiA family.

Functionally, involved in cell division and chromosome segregation. The protein is Probable cell division protein WhiA of Mycobacterium sp. (strain MCS).